The sequence spans 789 residues: MEEPGAGFILNMTSDSKVRAIVGRIRGLAAKTVPPPEMSWFDSQFDPEDAEGPFLPFSTFLITGTAGAGKSTSISALYQSLNCLITGATAVAAQNLSNGLKTYCPTIYSAFGFKSRHINILPRHGRNAPARDMEGIQRNELCKYWPVISDILGEFTKKKQRGQYEHLTGAAFGALAKMGTPTLWTTNIIVIDEAGTLSSHILTAVVFLYWFYNSWLQTPLYKSGAVPCVVCVGSPTQTDAIQSTYNHSMQKHHIQECDNILTFLMKHEAVSRYVDLNHNWALFINNKRCTDPEFGHLLKTLEYNLDISPRMVDYIDRFVVPKSKILSPLEYVGWTRLFVSHREVKAYLTALHETLSLNQGGATAEADARLFTCPVVCEVFTDTFNEYREAVNLPGLTVTEWLQKNLCRLSNYSQFIDQDLSAVHIETGEESTKVTYLVKYVKNSYVSLNGKTKKCICGFMGTFEKFKTILDNETFIDAHSHDQPEYVYSFLNTLLYNGMYAFHKHGLDAGDEGYLDALRRLPIPPNITHLSTFQDALDQTEAALLNPESDIFYHMTCAPPSASSASLSTLISFYMSLKSVFLQRLALAVSRFGRDFAERTFQTFTINMMIQNGVDFTSASERLFGLLGYASNVDTYKLKGYTFIPVGFGRFNQAELSRDLRDKMPVVVVEDPHGFIACLENNVNKMTEVMENGDLIHICTAGDYGISSKLAMTIAKAQGMSLSRVAVCFGNSKFVRKSHVYVAISRATDPRHMVIDCNPLKNLEEDREDNKTSKYIVQALNNPDTILVY.

64-71 (GTAGAGKS) is an ATP binding site.

It belongs to the herpesviridae helicase family. As to quaternary structure, associates with the primase and the primase-associated factor to form the helicase-primase complex.

The protein resides in the host nucleus. In terms of biological role, component of the helicase/primase complex. Unwinds the DNA at the replication forks and generates single-stranded DNA for both leading and lagging strand synthesis. The primase synthesizes short RNA primers on the lagging strand that the polymerase elongates using dNTPs. Possesses helicase-like motifs and therefore may act as the helicase subunit of the complex. In Equus caballus (Horse), this protein is DNA replication helicase.